A 322-amino-acid chain; its full sequence is Lipoyl synthase (322 aa).

Cys61, Cys66, Cys72, Cys87, Cys91, Cys94, and Ser300 together coordinate [4Fe-4S] cluster. One can recognise a Radical SAM core domain in the interval 73 to 289; that stretch reads WDKKHATFMI…ETVAYTKGFL (217 aa).

This sequence belongs to the radical SAM superfamily. Lipoyl synthase family. It depends on [4Fe-4S] cluster as a cofactor.

The protein resides in the cytoplasm. The catalysed reaction is [[Fe-S] cluster scaffold protein carrying a second [4Fe-4S](2+) cluster] + N(6)-octanoyl-L-lysyl-[protein] + 2 oxidized [2Fe-2S]-[ferredoxin] + 2 S-adenosyl-L-methionine + 4 H(+) = [[Fe-S] cluster scaffold protein] + N(6)-[(R)-dihydrolipoyl]-L-lysyl-[protein] + 4 Fe(3+) + 2 hydrogen sulfide + 2 5'-deoxyadenosine + 2 L-methionine + 2 reduced [2Fe-2S]-[ferredoxin]. It functions in the pathway protein modification; protein lipoylation via endogenous pathway; protein N(6)-(lipoyl)lysine from octanoyl-[acyl-carrier-protein]: step 2/2. In terms of biological role, catalyzes the radical-mediated insertion of two sulfur atoms into the C-6 and C-8 positions of the octanoyl moiety bound to the lipoyl domains of lipoate-dependent enzymes, thereby converting the octanoylated domains into lipoylated derivatives. The polypeptide is Lipoyl synthase (Rhizobium meliloti (strain 1021) (Ensifer meliloti)).